Reading from the N-terminus, the 961-residue chain is Roundabout homolog 4 (961 aa).

The signal sequence occupies residues 1–37; the sequence is MGQGEELRAAVDSGGMGLLGTKCPLPLLLLFIMGGKA. 2 Ig-like C2-type domains span residues 42–142 and 148–235; these read PQIL…ARLS and EDFR…ARVS. 2 disulfides stabilise this stretch: C63-C125 and C169-C218. Residues N211 and N257 are each glycosylated (N-linked (GlcNAc...) asparagine). 2 Fibronectin type-III domains span residues 259–356 and 358–453; these read TLLN…LPEQ and PSAP…LEQA. N-linked (GlcNAc...) asparagine glycans are attached at residues N371, N400, and N407. A compositionally biased stretch (low complexity) spans 544 to 559; it reads SGSRDLSSSSSLSSRL. Disordered stretches follow at residues 544–563 and 600–634; these read SGSR…GVDP and QTSS…SSDS. Over residues 623 to 634 the composition is skewed to polar residues; sequence TGTSSPWASSDS. N691 and N723 each carry an N-linked (GlcNAc...) asparagine glycan. Residues 726–810 are disordered; that stretch reads ELAARPLPPT…SLEEEDQDSV (85 aa). A compositionally biased stretch (low complexity) spans 755 to 769; the sequence is LQAPSSDPLPAAPLS. Polar residues predominate over residues 770–783; that stretch reads VLNSSRPSSPQASF. N-linked (GlcNAc...) asparagine glycans are attached at residues N772 and N793. Residues 784 to 801 show a composition bias toward low complexity; it reads LSVPSPGSSNLSSSSLSS. S823 is modified (phosphoserine).

Belongs to the immunoglobulin superfamily. ROBO family. As to quaternary structure, interacts with SLIT2 and ENAH.

In terms of biological role, receptor for Slit proteins, at least for SLIT2, and seems to be involved in angiogenesis and vascular patterning. May mediate the inhibition of primary endothelial cell migration by Slit proteins. Involved in the maintenance of endothelial barrier organization and function. This is Roundabout homolog 4 (Robo4) from Rattus norvegicus (Rat).